We begin with the raw amino-acid sequence, 113 residues long: UPF0122 protein Sez_1013 (113 aa).

This sequence belongs to the UPF0122 family.

Its function is as follows. Might take part in the signal recognition particle (SRP) pathway. This is inferred from the conservation of its genetic proximity to ftsY/ffh. May be a regulatory protein. The polypeptide is UPF0122 protein Sez_1013 (Streptococcus equi subsp. zooepidemicus (strain MGCS10565)).